The primary structure comprises 154 residues: Ribonuclease HI (154 aa).

Positions 1 to 142 (MQKQIEIFTD…CDQLAKAGAE (142 aa)) constitute an RNase H type-1 domain. 4 residues coordinate Mg(2+): Asp-10, Glu-48, Asp-70, and Asp-134.

It belongs to the RNase H family. As to quaternary structure, monomer. The cofactor is Mg(2+).

Its subcellular location is the cytoplasm. The enzyme catalyses Endonucleolytic cleavage to 5'-phosphomonoester.. In terms of biological role, endonuclease that specifically degrades the RNA of RNA-DNA hybrids. This chain is Ribonuclease HI (rnhA), found in Pasteurella multocida (strain Pm70).